The sequence spans 1088 residues: Protein unc-13 homolog D (1088 aa).

Positions 26–46 are disordered; it reads VRDLQDPPPQATPEVQVQSHH. The 148-residue stretch at 92–239 folds into the C2 1 domain; it reads QPEEHQQMLQ…FKEARKDKGQ (148 aa). Asp-127 and Asp-133 together coordinate Ca(2+). Ser-150 bears the Phosphoserine mark. Ca(2+) is bound by residues Asp-206 and Asp-208. Residues 240 to 543 are interaction with RAB27A; it reads DDFLGNVMLR…AKRVQDHTAA (304 aa). The MHD1 domain maps to 557-675; that stretch reads FQLYVSLREF…RLALVYCSLI (119 aa). The 108-residue stretch at 786–893 folds into the MHD2 domain; it reads EDAILPLMKF…ASSRELIQKY (108 aa). The C2 2 domain maps to 908–1033; the sequence is RLGAVTVKAS…PGLTGCVEPG (126 aa). Residues Leu-938, Asp-939, Asp-945, Asp-1003, Asp-1005, and Asp-1011 each contribute to the Ca(2+) site.

It belongs to the unc-13 family. As to quaternary structure, interacts with RAB27A and DOC2A. Interacts with RhoG; the interaction increases RhoG affinity to the membrane lipids, targets Unc13d to membrane lipids and facilitates cytotoxic granule (CG) docking to the plasma membrane. Ca(2+) serves as cofactor. In terms of tissue distribution, expressed in lung bronchial epithelium goblet/mucous cells. Also expressed in spleen and testis. Expressed at very low levels in heart muscle, kidney, liver, brain and skeletal muscle.

The protein localises to the cytoplasm. The protein resides in the membrane. Its subcellular location is the late endosome. It localises to the recycling endosome. It is found in the lysosome. Functionally, plays a role in cytotoxic granule exocytosis in lymphocytes. Required for both granule maturation and granule docking and priming at the immunologic synapse. Regulates assembly of recycling and late endosomal structures, leading to the formation of an endosomal exocytic compartment that fuses with perforin-containing granules at the immunologic synapse and licences them for exocytosis. Regulates Ca(2+)-dependent secretory lysosome exocytosis in mast cells. This is Protein unc-13 homolog D (Unc13d) from Rattus norvegicus (Rat).